The following is a 153-amino-acid chain: Putative tRNA (cytidine(34)-2'-O)-methyltransferase (153 aa).

S-adenosyl-L-methionine contacts are provided by Gly102, Ile122, and Ser131.

Belongs to the class IV-like SAM-binding methyltransferase superfamily. RNA methyltransferase TrmH family. TrmL subfamily.

Its subcellular location is the cytoplasm. The enzyme catalyses cytidine(34) in tRNA + S-adenosyl-L-methionine = 2'-O-methylcytidine(34) in tRNA + S-adenosyl-L-homocysteine + H(+). It carries out the reaction 5-carboxymethylaminomethyluridine(34) in tRNA(Leu) + S-adenosyl-L-methionine = 5-carboxymethylaminomethyl-2'-O-methyluridine(34) in tRNA(Leu) + S-adenosyl-L-homocysteine + H(+). In terms of biological role, could methylate the ribose at the nucleotide 34 wobble position in tRNA. This Synechocystis sp. (strain ATCC 27184 / PCC 6803 / Kazusa) protein is Putative tRNA (cytidine(34)-2'-O)-methyltransferase.